The chain runs to 1248 residues: Period circadian protein homolog 2 (1248 aa).

Positions 1-57 (MNGYVEFSPSPTKESVEPQPSQAVLQEDVDMSSGSSGHENCSMGRDSQGSDCDDNGK) are disordered. Composition is skewed to polar residues over residues 9 to 24 (PSPT…SQAV) and 32 to 50 (SSGS…SQGS). Residues 105–114 (LIRTLRELKV) carry the Nuclear export signal 1 motif. The region spanning 175 to 242 (ITSEYIVKNA…FHSYTTPYKL (68 aa)) is the PAS 1 domain. Residues 302 to 306 (LCCLL) carry the LXXLL motif. The region spanning 315-381 (YEAPRIPPEK…MLAIHKKILQ (67 aa)) is the PAS 2 domain. Residues 389-432 (YSPIRFRARNGEYITLDTSWSSFINPWSRKISFIIGRHKVRVGP) form the PAC domain. Positions 456-465 (LTEQIHRLLM) match the Nuclear export signal 2 motif. Disordered stretches follow at residues 467-563 (PVPH…SLPK) and 619-638 (VSPG…VSSH). The important for protein stability stretch occupies residues 474–478 (SGYGS). A CSNK1E binding domain region spans residues 506-706 (RKSGISKNGS…GAPGGLSQEK (201 aa)). Polar residues predominate over residues 510–521 (ISKNGSKTQTRS). Phosphoserine is present on residues Ser521, Ser524, Ser527, and Ser540. The segment covering 523 to 534 (FSHESGEQKEIA) has biased composition (basic and acidic residues). A phosphoserine mark is found at Ser656, Ser690, Ser694, Ser703, and Ser755. Disordered regions lie at residues 675 to 708 (DKKP…EKGP) and 751 to 829 (RAQA…PSAP). The Nuclear localization signal motif lies at 773-789 (KKTGKNRKLKSKRVKTR). Residues 774–787 (KTGKNRKLKSKRVK) show a composition bias toward basic residues. Positions 816-827 (SPSDTSQSSCPS) are enriched in low complexity. An interaction with PPARG region spans residues 873–1058 (DFAVQPLPLA…DLCSATGSAL (186 aa)). At Ser930 the chain carries Phosphoserine. The disordered stretch occupies residues 950 to 971 (TPPAATVTSGRASPPLFQSRGS). Phosphothreonine is present on Thr955. A Phosphoserine modification is found at Ser962. A Nuclear export signal 3 motif is present at residues 974-981 (LQLNLLQL). Positions 984 to 1035 (APEGSTGAAGTSGTTGTAAAGLDCTPGTSRDRQPKAPSTCKEPSDTQNSDAL) are disordered. The segment covering 987-1004 (GSTGAAGTSGTTGTAAAG) has biased composition (low complexity). The short motif at 1042 to 1046 (LNLLL) is the LXXLL element. The segment covering 1057–1080 (ALSGSGASATSDSLGSGSLGCDAS) has biased composition (low complexity). Residues 1057-1113 (ALSGSGASATSDSLGSGSLGCDASRSGAGSSDTSHTSKYFGSIDSSENNHKAKVSTD) form a disordered region. Polar residues predominate over residues 1083 to 1102 (GAGSSDTSHTSKYFGSIDSS). A compositionally biased stretch (basic and acidic residues) spans 1103 to 1112 (ENNHKAKVST). At Ser1117 the chain carries Phosphoserine. The CRY binding domain stretch occupies residues 1148 to 1248 (SRDLESVLRE…LTGPRIEAQT (101 aa)). Positions 1215-1248 (PYEEDSPSPGLCDTSEAKEEEGEQLTGPRIEAQT) are disordered.

As to quaternary structure, homodimer. Component of the circadian core oscillator, which includes the CRY proteins, CLOCK or NPAS2, BMAL1 or BMAL2, CSNK1D and/or CSNK1E, TIMELESS, and the PER proteins. Interacts with CLOCK-BMAL1 (off DNA). Interacts with BMAL2. Interacts directly with PER1 and PER3, and through a C-terminal domain, with CRY1 and CRY2. Interacts (via PAS 2 domain) with TIMELESS. Interacts with NFIL3. Different large complexes have been identified with different repressive functions. The core of PER complexes is composed of at least PER1, PER2, PER3, CRY1, CRY2, CSNK1D and/or CSNK1E. The large PER complex involved in the repression of transcriptional termination is composed of at least PER2, CDK9, DDX5, DHX9, NCBP1 and POLR2A (active). The large PER complex involved in the histone deacetylation is composed of at least HDAC1, PER2, SFPQ and SIN3A. The large PER complex involved in the histone methylation is composed of at least PER2, CBX3, TRIM28, SUV39H1 and/or SUV39H2; CBX3 mediates the formation of the complex. Interacts with SETX; the interaction inhibits termination of circadian target genes. Interacts with the nuclear receptors HNF4A, NR1D1, NR4A2, RORA, PPARA, PPARG and THRA; the interaction with at least PPARG is ligand dependent. Interacts with PML. Interacts (phosphorylated) with BTRC and FBXW11; the interactions trigger proteasomal degradation. Interacts with NONO and SFPQ. Interacts with PRKCDBP. Interacts with MAGEL2. Interacts with MAP1LC3B. Interacts with HNF4A. Acetylated. Deacetylated by SIRT1, resulting in decreased protein stability. Deacetylated by SIRT6, preventing its degradation by the proteasome, resulting in increased protein stability. In terms of processing, phosphorylated by CSNK1E and CSNK1D. Phosphorylation results in PER2 protein degradation. May be dephosphorylated by PP1. Post-translationally, ubiquitinated, leading to its proteasomal degradation. Ubiquitination may be inhibited by CRY1. As to expression, expressed in the brain, mainly in the suprachiasmatic nucleus (SCN). Expression also found in the harderian gland, lung, eye, intestine, liver and skeletal muscle.

The protein localises to the nucleus. It is found in the cytoplasm. Its subcellular location is the perinuclear region. Transcriptional repressor which forms a core component of the circadian clock. The circadian clock, an internal time-keeping system, regulates various physiological processes through the generation of approximately 24 hour circadian rhythms in gene expression, which are translated into rhythms in metabolism and behavior. It is derived from the Latin roots 'circa' (about) and 'diem' (day) and acts as an important regulator of a wide array of physiological functions including metabolism, sleep, body temperature, blood pressure, endocrine, immune, cardiovascular, and renal function. Consists of two major components: the central clock, residing in the suprachiasmatic nucleus (SCN) of the brain, and the peripheral clocks that are present in nearly every tissue and organ system. Both the central and peripheral clocks can be reset by environmental cues, also known as Zeitgebers (German for 'timegivers'). The predominant Zeitgeber for the central clock is light, which is sensed by retina and signals directly to the SCN. The central clock entrains the peripheral clocks through neuronal and hormonal signals, body temperature and feeding-related cues, aligning all clocks with the external light/dark cycle. Circadian rhythms allow an organism to achieve temporal homeostasis with its environment at the molecular level by regulating gene expression to create a peak of protein expression once every 24 hours to control when a particular physiological process is most active with respect to the solar day. Transcription and translation of core clock components (CLOCK, NPAS2, BMAL1, BMAL2, PER1, PER2, PER3, CRY1 and CRY2) plays a critical role in rhythm generation, whereas delays imposed by post-translational modifications (PTMs) are important for determining the period (tau) of the rhythms (tau refers to the period of a rhythm and is the length, in time, of one complete cycle). A diurnal rhythm is synchronized with the day/night cycle, while the ultradian and infradian rhythms have a period shorter and longer than 24 hours, respectively. Disruptions in the circadian rhythms contribute to the pathology of cardiovascular diseases, cancer, metabolic syndrome and aging. A transcription/translation feedback loop (TTFL) forms the core of the molecular circadian clock mechanism. Transcription factors, CLOCK or NPAS2 and BMAL1 or BMAL2, form the positive limb of the feedback loop, act in the form of a heterodimer and activate the transcription of core clock genes and clock-controlled genes (involved in key metabolic processes), harboring E-box elements (5'-CACGTG-3') within their promoters. The core clock genes: PER1/2/3 and CRY1/2 which are transcriptional repressors form the negative limb of the feedback loop and interact with the CLOCK|NPAS2-BMAL1|BMAL2 heterodimer inhibiting its activity and thereby negatively regulating their own expression. This heterodimer also activates nuclear receptors NR1D1/2 and RORA/B/G, which form a second feedback loop and which activate and repress BMAL1 transcription, respectively. PER1 and PER2 proteins transport CRY1 and CRY2 into the nucleus with appropriate circadian timing, but also contribute directly to repression of clock-controlled target genes through interaction with several classes of RNA-binding proteins, helicases and others transcriptional repressors. PER appears to regulate circadian control of transcription by at least three different modes. First, interacts directly with the CLOCK-BMAL1 at the tail end of the nascent transcript peak to recruit complexes containing the SIN3-HDAC that remodel chromatin to repress transcription. Second, brings H3K9 methyltransferases such as SUV39H1 and SUV39H2 to the E-box elements of the circadian target genes, like PER2 itself or PER1. The recruitment of each repressive modifier to the DNA seems to be very precisely temporally orchestrated by the large PER complex, the deacetylases acting before than the methyltransferases. Additionally, large PER complexes are also recruited to the target genes 3' termination site through interactions with RNA-binding proteins and helicases that may play a role in transcription termination to regulate transcription independently of CLOCK-BMAL1 interactions. Recruitment of large PER complexes to the elongating polymerase at PER and CRY termination sites inhibited SETX action, impeding RNA polymerase II release and thereby repressing transcriptional reinitiation. May propagate clock information to metabolic pathways via the interaction with nuclear receptors. Coactivator of PPARA and corepressor of NR1D1, binds rhythmically at the promoter of nuclear receptors target genes like BMAL1 or G6PC1. Directly and specifically represses PPARG proadipogenic activity by blocking PPARG recruitment to target promoters and thereby transcriptional activation. Required for fatty acid and lipid metabolism, is involved as well in the regulation of circulating insulin levels. Plays an important role in the maintenance of cardiovascular functions through the regulation of NO and vasodilatatory prostaglandins production in aortas. Controls circadian glutamate uptake in synaptic vesicles through the regulation of VGLUT1 expression. May also be involved in the regulation of inflammatory processes. Represses the CLOCK-BMAL1 induced transcription of BHLHE40/DEC1 and ATF4. Negatively regulates the formation of the TIMELESS-CRY1 complex by competing with TIMELESS for binding to CRY1. This is Period circadian protein homolog 2 (PER2) from Spalax judaei (Judean Mountains blind mole rat).